Consider the following 132-residue polypeptide: uncharacterized protein (132 aa).

2 consecutive transmembrane segments (helical) span residues phenylalanine 44–isoleucine 64 and isoleucine 75–phenylalanine 95.

Its subcellular location is the cytoplasm. It localises to the membrane. This is an uncharacterized protein from Schizosaccharomyces pombe (strain 972 / ATCC 24843) (Fission yeast).